A 281-amino-acid polypeptide reads, in one-letter code: Bifunctional protein FolD (281 aa).

NADP(+) contacts are provided by residues 164 to 166, I189, and I230; that span reads GAS.

This sequence belongs to the tetrahydrofolate dehydrogenase/cyclohydrolase family. Homodimer.

The catalysed reaction is (6R)-5,10-methylene-5,6,7,8-tetrahydrofolate + NADP(+) = (6R)-5,10-methenyltetrahydrofolate + NADPH. It carries out the reaction (6R)-5,10-methenyltetrahydrofolate + H2O = (6R)-10-formyltetrahydrofolate + H(+). Its pathway is one-carbon metabolism; tetrahydrofolate interconversion. Its function is as follows. Catalyzes the oxidation of 5,10-methylenetetrahydrofolate to 5,10-methenyltetrahydrofolate and then the hydrolysis of 5,10-methenyltetrahydrofolate to 10-formyltetrahydrofolate. The polypeptide is Bifunctional protein FolD (Sulfurovum sp. (strain NBC37-1)).